Here is a 25-residue protein sequence, read N- to C-terminus: Chrysophsin-2 (25 aa).

Histidine amide is present on His-25.

In terms of tissue distribution, gill.

It localises to the secreted. In terms of biological role, has antibacterial activity against Gram-positive bacteria B.subtilis ATCC 6633, L.garvieae ATCC 49156 and S.iniae F-8502, and Gram-negative bacteria E.coli WT-2, V.anguillarum ATCC 19264, V.penaeicida KHA, V.harveyi ATCC 14126, V.vulnificus ATCC 33148 and A.salmonicida NCMB 1102. Has hemolytic activity against human red blood cells. Seems to disrupt the membranes by adopting an alpha helical conformation. May play a significant role in innate host defense. The sequence is that of Chrysophsin-2 from Pagrus major (Red sea bream).